The primary structure comprises 307 residues: Heme A synthase (307 aa).

Over 1–6 (MKFALR) the chain is Cytoplasmic. Residues 7–27 (LLSVITTFVMLIVLIGGALVT) traverse the membrane as a helical segment. At 28 to 65 (KTGSGLGCGRQWPLCHGRFFPEMNPASIIEWSHRMSTG) the chain is on the extracellular side. A disulfide bridge connects residues Cys35 and Cys42. Residue Glu57 is part of the active site. Position 60 (His60) interacts with heme o. Residues 66–86 (VSTILVLALAVLCWKKISPVF) form a helical membrane-spanning segment. Topologically, residues 87-92 (RETKFL) are cytoplasmic. Residues 93 to 113 (VIMSIIFLLLQALLGALAVVF) form a helical membrane-spanning segment. The Extracellular portion of the chain corresponds to 114–121 (GSNALVMA). Residues 122 to 142 (LHFGISLISFASVLLLALLVF) traverse the membrane as a helical segment. His123 lines the heme o pocket. Residues 143 to 161 (EATRSETKLVKPLHIGKKM) are Cytoplasmic-facing. Residues 162 to 182 (QFHIYGLITYTYIVVYTGAYV) traverse the membrane as a helical segment. Residues 183–216 (RHTKSSLACSVFPFCSKDGALPAYFNQWVQMSHR) are Extracellular-facing. Cys191 and Cys197 are joined by a disulfide. His215 lines the heme b pocket. A helical membrane pass occupies residues 217–237 (AAALLLFVWIFVAMFHAMKHY). Residues 238 to 242 (KEQKQ) are Cytoplasmic-facing. Residues 243–263 (LYYGWIISAILITLQAISGVM) traverse the membrane as a helical segment. At 264–274 (SVYSQLALGYA) the chain is on the extracellular side. A helical membrane pass occupies residues 275–295 (LAHSFFISCLFGVLCYFCLLI). His277 provides a ligand contact to heme b. The Cytoplasmic segment spans residues 296-307 (ARFKYESKEPFK).

It belongs to the COX15/CtaA family. Type 1 subfamily. As to quaternary structure, interacts with CtaB. It depends on heme b as a cofactor.

The protein resides in the cell membrane. It catalyses the reaction Fe(II)-heme o + 2 A + H2O = Fe(II)-heme a + 2 AH2. Its pathway is porphyrin-containing compound metabolism; heme A biosynthesis; heme A from heme O: step 1/1. Functionally, catalyzes the conversion of heme O to heme A by two successive hydroxylations of the methyl group at C8. The first hydroxylation forms heme I, the second hydroxylation results in an unstable dihydroxymethyl group, which spontaneously dehydrates, resulting in the formyl group of heme A. The chain is Heme A synthase from Bacillus pumilus (strain SAFR-032).